Consider the following 309-residue polypeptide: 2-phospho-L-lactate transferase (309 aa).

Asp-48 and Lys-87 together coordinate 7,8-didemethyl-8-hydroxy-5-deazariboflavin.

The protein belongs to the CofD family. In terms of assembly, homodimer. It depends on Mg(2+) as a cofactor.

The catalysed reaction is (2S)-lactyl-2-diphospho-5'-guanosine + 7,8-didemethyl-8-hydroxy-5-deazariboflavin = oxidized coenzyme F420-0 + GMP + H(+). It participates in cofactor biosynthesis; coenzyme F420 biosynthesis. Functionally, catalyzes the transfer of the 2-phospholactate moiety from (2S)-lactyl-2-diphospho-5'-guanosine to 7,8-didemethyl-8-hydroxy-5-deazariboflavin (FO) with the formation of oxidized coenzyme F420-0 and GMP. The chain is 2-phospho-L-lactate transferase from Methanosarcina barkeri (strain Fusaro / DSM 804).